A 489-amino-acid polypeptide reads, in one-letter code: EGF-like domain-containing protein 2 (489 aa).

An N-terminal signal peptide occupies residues 1 to 23 (MMQTLLRGLCVVVLFWGYIKASA). Positions 73–109 (PATLCDPPCLNGGQCFEPTADTYMCMCSEAFYGSQCE) constitute an EGF-like domain. 3 disulfides stabilise this stretch: C77–C87, C81–C97, and C99–C108. The ZP domain maps to 116 to 370 (ECSGDQITIN…GSCPTPAPPA (255 aa)). N-linked (GlcNAc...) asparagine glycosylation is present at N229. 2 disordered regions span residues 358–389 (CEPG…AASD) and 404–425 (RSNE…QNAD). Residues 363-374 (CPTPAPPAPVQP) are compositionally biased toward pro residues. Basic and acidic residues predominate over residues 404–420 (RSNEKLRLPHNKSDKKS). N414 and N479 each carry an N-linked (GlcNAc...) asparagine glycan.

In terms of tissue distribution, component of the acid-insoluble organic matrix of calcified layers of the shell (at protein level).

Its subcellular location is the secreted. The sequence is that of EGF-like domain-containing protein 2 from Lottia gigantea (Giant owl limpet).